The sequence spans 1057 residues: Outer capsid protein VP2 (1057 aa).

Belongs to the orbivirus VP2 family.

The protein localises to the virion. Its function is as follows. The VP2 protein is one of the two proteins (with VP5) which constitute the virus particle outer capsid. It is the major target of the host immunogenic response. The chain is Outer capsid protein VP2 (Segment-2) from Anas (ducks).